The sequence spans 310 residues: Mitochondrial citrate transporter F (310 aa).

Solcar repeat units lie at residues 23-108, 115-207, and 216-303; these read KKVH…LKNH, PPGL…FKRL, and DNMG…HKKL. 6 helical membrane-spanning segments follow: residues 29 to 49, 85 to 105, 122 to 142, 186 to 206, 222 to 242, and 275 to 296; these read FWFG…LDLV, SAAI…YEEL, IGMA…ADVL, NSTR…TFKR, FTAS…VDVI, and AFRG…TFIF.

The protein belongs to the mitochondrial carrier (TC 2.A.29) family.

Its subcellular location is the mitochondrion inner membrane. Functionally, mitochondrial transporter that does not mediate citrate export from mitochondria to cytoplasm. Its exact function has still to be determined. This is Mitochondrial citrate transporter F from Aspergillus niger (strain ATCC 1015 / CBS 113.46 / FGSC A1144 / LSHB Ac4 / NCTC 3858a / NRRL 328 / USDA 3528.7).